Here is a 437-residue protein sequence, read N- to C-terminus: UDP-glucuronate 4-epimerase 4 (437 aa).

A helical transmembrane segment spans residues 30–50 (SLTKFAFFSFFLLCLISLLFL). The interval 56–76 (INPSSPSDPSRRSLRTNTYGG) is disordered. The helical transmembrane segment at 96-116 (GITVLVTGAAGFVGTHVSAAL) threads the bilayer. 98-129 (TVLVTGAAGFVGTHVSAALKRRGDGVIGLDNF) contributes to the NAD(+) binding site. Residue Tyr-248 is the Proton acceptor of the active site.

It belongs to the NAD(P)-dependent epimerase/dehydratase family. As to quaternary structure, homodimer. In terms of tissue distribution, in roots, leaves, siliques, flowers, pollen and stems.

It is found in the golgi apparatus. It localises to the golgi stack membrane. The enzyme catalyses UDP-alpha-D-glucuronate = UDP-alpha-D-galacturonate. With respect to regulation, activated by glycerol, not effected by dimethyl sulfoxide and inhibited by high concentration of monovalent salts, UDP-xylose, UDP-arabinose or UDP. Involved in the synthesis of the negatively charged monosaccharide that forms the backbone of pectic cell wall components. The sequence is that of UDP-glucuronate 4-epimerase 4 (GAE4) from Arabidopsis thaliana (Mouse-ear cress).